The following is a 323-amino-acid chain: Phosphopantothenate--cysteine ligase 2 (323 aa).

Belongs to the PPC synthetase family. In terms of assembly, homodimer.

It catalyses the reaction (R)-4'-phosphopantothenate + L-cysteine + CTP = N-[(R)-4-phosphopantothenoyl]-L-cysteine + CMP + diphosphate + H(+). The protein operates within cofactor biosynthesis; coenzyme A biosynthesis; CoA from (R)-pantothenate: step 2/5. Functionally, catalyzes the first step in the biosynthesis of coenzyme A from vitamin B5, where cysteine is conjugated to 4'-phosphopantothenate to form 4-phosphopantothenoylcysteine. The sequence is that of Phosphopantothenate--cysteine ligase 2 from Oryza sativa subsp. japonica (Rice).